The chain runs to 213 residues: MTDQSHQCVIIGIAGASASGKSLIASTLYRELREQVGDEHIGVIPEDCYYKDQSHLSMEERVKTNYDHPSAMDHSLLLEHLQALKRGSAIDLPVYSYVEHTRMKETVKVEPKKVIILEGILLLTDARLRDELNFSIFVDTPLDICLMRRIKRDVNERGRSMDSVMAQYQKTVRPMFLQFIEPSKQYADIIVPRGGKNRIAIDILKAKISQFFE.

An ATP-binding site is contributed by 15–22 (GASASGKS).

The protein belongs to the uridine kinase family.

It is found in the cytoplasm. It carries out the reaction uridine + ATP = UMP + ADP + H(+). The catalysed reaction is cytidine + ATP = CMP + ADP + H(+). It functions in the pathway pyrimidine metabolism; CTP biosynthesis via salvage pathway; CTP from cytidine: step 1/3. The protein operates within pyrimidine metabolism; UMP biosynthesis via salvage pathway; UMP from uridine: step 1/1. This is Uridine kinase from Escherichia fergusonii (strain ATCC 35469 / DSM 13698 / CCUG 18766 / IAM 14443 / JCM 21226 / LMG 7866 / NBRC 102419 / NCTC 12128 / CDC 0568-73).